The primary structure comprises 601 residues: FAD-binding monooxygenase stcW (601 aa).

Residues 42 to 43 (FS), E64, W73, D84, Y90, and V133 contribute to the FAD site.

The protein belongs to the FAD-binding monooxygenase family. FAD is required as a cofactor.

It functions in the pathway mycotoxin biosynthesis; sterigmatocystin biosynthesis. Its function is as follows. FAD-binding monooxygenase; part of the gene cluster that mediates the biosynthesis of sterigmatocystin (ST), a polyketide-derived furanocoumarin which is part of the most toxic and carcinogenic compounds among the known mycotoxins. The first step in the biosynthesis of sterigmatocystin is the production of hexanoate by the fatty acid synthase (FAS) units stcJ and stcK. The polyketide backbone is assembled by the non-reducing polyketide synthase stcA by condensation of the starter hexanoyl-CoA and 7 malonyl-CoA extender units followed by cyclization and release of norsolorinic acid. Norsolorinic acid is the first stable intermediate in the biosynthesis of sterigmatocystin and is converted into averantin (AVN) by the ketoreductase stcE which reduces the hexanoate ketone to an alcohol. Averantin is then oxidized into 5'-hydroxyaverantin (HAVN) by the cytochrome P450 monooxygenase stcF. 5'-hydroxyaverantin is further converted to 5'-oxyaverantin (OAVN) by the 5'-hydroxyaverantin dehydrogenase stcG. The next step is the conversion of OAVN into averufin (AVF) which is catalyzed by a yet to be identified enzyme. The cytochrome P450 monooxygenase stcB and the flavin-binding monooxygenase stcW are both required for the conversion of averufin to 1-hydroxyversicolorone. The esterase stcI probably catalyzes the formation of versiconal hemiacetal acetate from 1-hydroxyversicolorone. The oxydoreductase stcN then probably catalyzes the biosynthetic step from versiconal to versicolorin B (VERB). The next step is performed by the versicolorin B desaturase stcL to produce versicolorin A (VERA). The ketoreductase stcU and the cytochrome P450 monooxygenase stcS are involved in the conversion of versicolorin A to demethylsterigmatocystin. The Baeyer-Villiger oxidas stcQ and the reductase stcR might be involved in the biosynthetic step from versicolorin A to demethylsterigmatocystin. The final step in the biosynthesis of sterigmatocystin is the methylation of demethylsterigmatocystin catalyzed by the methyltransferase stcP. The sequence is that of FAD-binding monooxygenase stcW from Emericella nidulans (strain FGSC A4 / ATCC 38163 / CBS 112.46 / NRRL 194 / M139) (Aspergillus nidulans).